The primary structure comprises 429 residues: Adenylosuccinate synthetase (429 aa).

GTP is bound by residues 13–19 and 41–43; these read GDEGKGK and GHT. The active-site Proton acceptor is Asp14. Mg(2+) contacts are provided by Asp14 and Gly41. Residues 14–17, 39–42, Thr130, Arg144, Gln225, Thr240, and Arg304 contribute to the IMP site; these read DEGK and NAGH. His42 acts as the Proton donor in catalysis. A substrate-binding site is contributed by 300 to 306; the sequence is ATTGRAR. GTP contacts are provided by residues Arg306, 332-334, and 413-415; these read KLD and STG.

It belongs to the adenylosuccinate synthetase family. In terms of assembly, homodimer. Mg(2+) is required as a cofactor.

The protein localises to the cytoplasm. It carries out the reaction IMP + L-aspartate + GTP = N(6)-(1,2-dicarboxyethyl)-AMP + GDP + phosphate + 2 H(+). It participates in purine metabolism; AMP biosynthesis via de novo pathway; AMP from IMP: step 1/2. In terms of biological role, plays an important role in the de novo pathway of purine nucleotide biosynthesis. Catalyzes the first committed step in the biosynthesis of AMP from IMP. The chain is Adenylosuccinate synthetase from Pseudomonas fluorescens (strain SBW25).